A 499-amino-acid polypeptide reads, in one-letter code: L-arabinose isomerase (499 aa).

The Mn(2+) site is built by E306, E333, H350, and H449.

This sequence belongs to the arabinose isomerase family. Requires Mn(2+) as cofactor.

It catalyses the reaction beta-L-arabinopyranose = L-ribulose. It functions in the pathway carbohydrate degradation; L-arabinose degradation via L-ribulose; D-xylulose 5-phosphate from L-arabinose (bacterial route): step 1/3. Catalyzes the conversion of L-arabinose to L-ribulose. The sequence is that of L-arabinose isomerase from Tolumonas auensis (strain DSM 9187 / NBRC 110442 / TA 4).